The chain runs to 1128 residues: Apoptosis-stimulating of p53 protein 2 (1128 aa).

2 disordered regions span residues 86–106 and 322–341; these read PGRD…RNGV and KENL…ASAP. Over residues 322–339 the composition is skewed to polar residues; it reads KENLPVSSDGNLPQQAAS. The interaction with APPBP1 stretch occupies residues 332-348; the sequence is NLPQQAASAPSRVAAVG. A Phosphoserine modification is found at serine 480. 2 disordered regions span residues 494–598 and 655–706; these read NVAK…LPPF and NQQQ…LPFL. The span at 528-537 shows a compositional bias: polar residues; it reads GSSQQLSTVV. Serine 556, serine 569, serine 572, and serine 576 each carry phosphoserine. Polar residues predominate over residues 558 to 575; the sequence is SIPSVGQDQTLSPGSKQE. Over residues 655–670 the composition is skewed to polar residues; it reads NQQQHPENIYSNSQGK. Phosphoserine occurs at positions 698, 714, and 737. Disordered stretches follow at residues 724–748 and 802–909; these read KLSN…NGPN and SLVP…TNLR. Positions 840 to 849 are enriched in low complexity; it reads NSPNLQNNPE. The SH3-binding motif lies at 866-875; sequence YPPYPPPPYP. Over residues 867 to 876 the composition is skewed to pro residues; the sequence is PPYPPPPYPS. The segment at 876-1128 is mediates interaction with APC2; that stretch reads SGEPEGPGED…RIKPRQRSLA (253 aa). 4 ANK repeats span residues 926 to 957, 958 to 990, 991 to 1024, and 1025 to 1067; these read PLAL…LPND, EGIT…AADS, DGWT…MTYS, and DMQT…ALWD. The region spanning 1057 to 1119 is the SH3 domain; it reads MNKGVIYALW…PRNLLGLYPR (63 aa).

The protein belongs to the ASPP family. In terms of assembly, interacts with P53/TP53; the interaction promotes pro-apoptotic activity. Interacts with BCL2. Interacts with protein phosphatase 1. Interacts with RELA NF-kappa-B subunit. This interaction probably prevents the activation of apoptosis, possibly by preventing its interaction with TP53. Interacts with APC2 and NAE1. Interacts with DDX42 (via the C-terminus); the interaction is not inhibited by TP53BP2 ubiquitination and is independent of p53/TP53. As to expression, widely expressed. Expressed in spleen, thymus, prostate, testis, ovary, small intestine, colon and peripheral blood leukocyte. Reduced expression in breast carcinomas expressing a wild-type TP53 protein. Overexpressed in lung cancer cell lines.

Its subcellular location is the cytoplasm. The protein resides in the perinuclear region. It is found in the nucleus. Its function is as follows. Regulator that plays a central role in regulation of apoptosis and cell growth via its interactions with proteins such as TP53. Regulates TP53 by enhancing the DNA binding and transactivation function of TP53 on the promoters of proapoptotic genes in vivo. Inhibits the ability of NAE1 to conjugate NEDD8 to CUL1, and thereby decreases NAE1 ability to induce apoptosis. Impedes cell cycle progression at G2/M. Its apoptosis-stimulating activity is inhibited by its interaction with DDX42. The protein is Apoptosis-stimulating of p53 protein 2 (TP53BP2) of Homo sapiens (Human).